The chain runs to 2351 residues: Coagulation factor VIII (2351 aa).

Residues 1–19 form the signal peptide; it reads MQIELSTCFFLCLLRFCFS. Plastocyanin-like domains follow at residues 20-198 and 206-348; these read ATRR…LLVC and EKTQ…VDSC. The F5/8 type A 1 domain occupies 20–348; that stretch reads ATRRYYLGAV…MEAYVKVDSC (329 aa). N60 is a glycosylation site (N-linked (GlcNAc...) asparagine). C172 and C198 are joined by a disulfide. N-linked (GlcNAc...) asparagine glycosylation is present at N258. A disulfide bridge links C267 with C348. Y365 carries the sulfotyrosine modification. Plastocyanin-like domains lie at 399-573 and 583-730; these read KTWV…LLIC and NQIM…VSSC. The 332-residue stretch at 399–730 folds into the F5/8 type A 2 domain; sequence KTWVHYIAAE…MTALLKVSSC (332 aa). A disulfide bridge connects residues C547 and C573. N-linked (GlcNAc...) asparagine glycosylation is present at N601. A disulfide bridge links C649 with C730. Y737, Y738, and Y742 each carry sulfotyrosine. The interval 760-1667 is b; that stretch reads SFSQNSRHPS…NPPVLKRHQR (908 aa). N-linked (GlcNAc...) asparagine glycans are attached at residues N776, N803, N847, and N919. Disordered stretches follow at residues 906 to 928 and 941 to 961; these read STIP…PPSM and FGKK…SEEN. N962, N982, N1020, N1024, N1074, N1085, N1204, N1274, N1278, N1301, N1319, N1431, and N1461 each carry an N-linked (GlcNAc...) asparagine glycan. Sulfotyrosine is present on residues Y1683 and Y1699. Plastocyanin-like domains follow at residues 1713-1877 and 1887-2040; these read KTRH…LLVC and GRQV…SNKC. The F5/8 type A 3 domain maps to 1713–2040; sequence KTRHYFIAAV…TLFLVYSNKC (328 aa). N-linked (GlcNAc...) asparagine glycosylation is present at N1829. 4 cysteine pairs are disulfide-bonded: C1851/C1877, C1918/C1922, C2040/C2188, and C2193/C2345. F5/8 type C domains lie at 2040–2188 and 2193–2345; these read CQTP…LMGC and CSMP…VLGC. N-linked (GlcNAc...) asparagine glycosylation occurs at N2137.

It belongs to the multicopper oxidase family. Interacts with VWF/vWF. vWF binding is essential for the stabilization of F8 in circulation. Sulfation on Tyr-1699 is essential for binding vWF. Post-translationally, proteolytically cleaved by cathepsin CTSG to produce a partially activated form.

It is found in the secreted. It localises to the extracellular space. Functionally, factor VIII, along with calcium and phospholipid, acts as a cofactor for F9/factor IXa when it converts F10/factor X to the activated form, factor Xa. The protein is Coagulation factor VIII (F8) of Homo sapiens (Human).